Reading from the N-terminus, the 350-residue chain is Solute carrier family 35 member E4 (350 aa).

Residues 19–30 show a composition bias toward low complexity; that stretch reads GAAAGGAQAAGP. Positions 19–42 are disordered; sequence GAAAGGAQAAGPPEWPPGSPQALR. 8 helical membrane passes run 51 to 71, 73 to 93, 110 to 132, 135 to 155, 218 to 238, 258 to 278, 279 to 299, and 312 to 332; these read MAALVWLLAGASMSSLNKWIF, VHGFGRPLLLSALHMLVAALA, VLLLSLTFGTSMACGNVGLRAVP, LAQLVTTTTPLFTLALSALLL, VTLLYATSLPSFCLLAGAALV, ILLSCLLSVLYNLASFSLLAL, TSALTVHVLGNLTVVGNLILS, and YVGIALTLSGMFLYHNCEFVA. Residues 125–179 form the EamA domain; the sequence is NVGLRAVPLDLAQLVTTTTPLFTLALSALLLGRRHHPLQLAAMGPLCLGAACSLA.

This sequence belongs to the TPT transporter family. SLC35E subfamily.

The protein resides in the membrane. Putative transporter. This Homo sapiens (Human) protein is Solute carrier family 35 member E4 (SLC35E4).